Consider the following 370-residue polypeptide: Homospermidine synthase (370 aa).

The protein belongs to the deoxyhypusine synthase family. Homotetramer. Requires NAD(+) as cofactor.

The enzyme catalyses putrescine + spermidine = sym-homospermidine + propane-1,3-diamine. The protein operates within alkaloid biosynthesis; pyrrolizidine alkaloid biosynthesis. Catalyzes the transfer of an aminobutyl unit from spermidine onto putrescine. The resulting polyamine homospermidine is a precursor in the biosynthesis of pyrrolizidine alkaloids. The chain is Homospermidine synthase (HSS1) from Senecio vulgaris (Common groundsel).